The following is a 353-amino-acid chain: Putative transport protein YrrI (353 aa).

The next 8 membrane-spanning stretches (helical) occupy residues 8-28, 37-57, 77-97, 165-185, 220-240, 243-263, 269-289, and 311-331; these read LLLW…FFML, LVIK…YLLL, IYVL…PVLI, FLIA…IELM, LLVC…FGLP, LILG…PFIG, LIAM…VFIL, and VVIM…GMIL.

The protein belongs to the autoinducer-2 exporter (AI-2E) (TC 2.A.86) family.

The protein localises to the cell membrane. The chain is Putative transport protein YrrI (yrrI) from Bacillus subtilis (strain 168).